A 505-amino-acid chain; its full sequence is 2,3-bisphosphoglycerate-independent phosphoglycerate mutase (505 aa).

Asp13 and Ser63 together coordinate Mn(2+). The active-site Phosphoserine intermediate is the Ser63. Substrate is bound by residues His124, 153–154 (RD), Arg183, Arg189, 254–257 (RADR), and Lys330. Asp396, His400, Asp437, His438, and His456 together coordinate Mn(2+).

The protein belongs to the BPG-independent phosphoglycerate mutase family. As to quaternary structure, monomer. Mn(2+) serves as cofactor.

The catalysed reaction is (2R)-2-phosphoglycerate = (2R)-3-phosphoglycerate. The protein operates within carbohydrate degradation; glycolysis; pyruvate from D-glyceraldehyde 3-phosphate: step 3/5. Functionally, catalyzes the interconversion of 2-phosphoglycerate and 3-phosphoglycerate. The sequence is that of 2,3-bisphosphoglycerate-independent phosphoglycerate mutase from Dinoroseobacter shibae (strain DSM 16493 / NCIMB 14021 / DFL 12).